Here is a 291-residue protein sequence, read N- to C-terminus: Porphobilinogen deaminase (291 aa).

At C237 the chain carries S-(dipyrrolylmethanemethyl)cysteine.

The protein belongs to the HMBS family. As to quaternary structure, monomer. It depends on dipyrromethane as a cofactor.

The enzyme catalyses 4 porphobilinogen + H2O = hydroxymethylbilane + 4 NH4(+). It participates in porphyrin-containing compound metabolism; protoporphyrin-IX biosynthesis; coproporphyrinogen-III from 5-aminolevulinate: step 2/4. Its function is as follows. Tetrapolymerization of the monopyrrole PBG into the hydroxymethylbilane pre-uroporphyrinogen in several discrete steps. The protein is Porphobilinogen deaminase of Clostridium perfringens (strain 13 / Type A).